A 392-amino-acid polypeptide reads, in one-letter code: Putative cystathionine gamma-lyase (392 aa).

Over residues 1 to 10 the composition is skewed to polar residues; it reads MSDSATTDSA. The segment at 1 to 41 is disordered; sequence MSDSATTDSAGTGGERSASAPGDGTRAVRAGLPEPVKHEPT. Lysine 216 is modified (N6-(pyridoxal phosphate)lysine).

It belongs to the trans-sulfuration enzymes family. It depends on pyridoxal 5'-phosphate as a cofactor.

The protein localises to the cytoplasm. It catalyses the reaction L,L-cystathionine + H2O = 2-oxobutanoate + L-cysteine + NH4(+). It functions in the pathway amino-acid biosynthesis; L-cysteine biosynthesis; L-cysteine from L-homocysteine and L-serine: step 2/2. The protein is Putative cystathionine gamma-lyase (cysA) of Streptomyces coelicolor (strain ATCC BAA-471 / A3(2) / M145).